A 247-amino-acid chain; its full sequence is EGF-like domain-containing protein C02B10.3 (247 aa).

An N-terminal signal peptide occupies residues 1–17; that stretch reads MTGALCIVLFGVTMVTA. Topologically, residues 18–220 are extracellular; that stretch reads ERPKIKDTHG…LCDKRCQKGH (203 aa). EGF-like domains follow at residues 114–150 and 180–213; these read FGTS…RFCE and SGAS…DLCD. Disulfide bonds link C123-C138, C140-C149, C190-C201, and C203-C212. An N-linked (GlcNAc...) asparagine glycan is attached at N126. Residues 221–240 traverse the membrane as a helical segment; it reads VTCSTCSSFIPAALFAIILL. Residues 241 to 247 lie on the Cytoplasmic side of the membrane; sequence CVNKFNY.

It is found in the membrane. This chain is EGF-like domain-containing protein C02B10.3, found in Caenorhabditis elegans.